The sequence spans 102 residues: Vesicle-associated membrane protein 5 (102 aa).

Over 1–72 the chain is Cytoplasmic; the sequence is MAGKELERCQ…RWENIRCRVY (72 aa). Residues 5 to 65 form the v-SNARE coiled-coil homology domain; that stretch reads ELERCQRQAD…KTLAQQKRWE (61 aa). Phosphoserine occurs at positions 41, 48, and 49. A helical; Anchor for type IV membrane protein membrane pass occupies residues 73 to 93; it reads LGLAVAGGLLLILVVLLVIFL. The Vesicular portion of the chain corresponds to 94–102; it reads PSGEDSSKP.

Belongs to the synaptobrevin family.

Its subcellular location is the cell membrane. It is found in the endomembrane system. It localises to the golgi apparatus. The protein localises to the trans-Golgi network membrane. In terms of biological role, may participate in trafficking events that are associated with myogenesis, such as myoblast fusion and/or GLUT4 trafficking. The polypeptide is Vesicle-associated membrane protein 5 (Vamp5) (Rattus norvegicus (Rat)).